The primary structure comprises 187 residues: MATTSDLRTNMIIRHNGQLHRVMEFYHHAPGNWRAMVIMKLKNIETGKTIEERVRAGSEIEIVRVEKRPMQFLYREGDIYHFMDTETFEQIEVAEDLIGEPAKFLKENEMADILFYDDNKILGVEPPLFVTLQVTEASVAVRGDTATNVNKQVTLETGAVISVPAFVNQGDYVRVDTRTGEYIERIK.

It belongs to the elongation factor P family.

The protein localises to the cytoplasm. The protein operates within protein biosynthesis; polypeptide chain elongation. Its function is as follows. Involved in peptide bond synthesis. Stimulates efficient translation and peptide-bond synthesis on native or reconstituted 70S ribosomes in vitro. Probably functions indirectly by altering the affinity of the ribosome for aminoacyl-tRNA, thus increasing their reactivity as acceptors for peptidyl transferase. This Roseiflexus castenholzii (strain DSM 13941 / HLO8) protein is Elongation factor P.